A 123-amino-acid chain; its full sequence is Small ribosomal subunit protein uS13 (123 aa).

The tract at residues 97-123 (PVRGQRTHTNAKTRKGRSRLPVAAKKK) is disordered.

This sequence belongs to the universal ribosomal protein uS13 family. In terms of assembly, part of the 30S ribosomal subunit. Forms a loose heterodimer with protein S19. Forms two bridges to the 50S subunit in the 70S ribosome.

Its function is as follows. Located at the top of the head of the 30S subunit, it contacts several helices of the 16S rRNA. In the 70S ribosome it contacts the 23S rRNA (bridge B1a) and protein L5 of the 50S subunit (bridge B1b), connecting the 2 subunits; these bridges are implicated in subunit movement. Contacts the tRNAs in the A and P-sites. The protein is Small ribosomal subunit protein uS13 of Ehrlichia ruminantium (strain Gardel).